The sequence spans 410 residues: CinA-like protein (410 aa).

It belongs to the CinA family.

This is CinA-like protein from Anaeromyxobacter sp. (strain Fw109-5).